The sequence spans 479 residues: Ribosomal RNA small subunit methyltransferase F (479 aa).

S-adenosyl-L-methionine contacts are provided by residues 125-131, glutamate 149, aspartate 176, and aspartate 194; that span reads AAAPGSK. The active-site Nucleophile is the cysteine 247.

It belongs to the class I-like SAM-binding methyltransferase superfamily. RsmB/NOP family.

It is found in the cytoplasm. The enzyme catalyses cytidine(1407) in 16S rRNA + S-adenosyl-L-methionine = 5-methylcytidine(1407) in 16S rRNA + S-adenosyl-L-homocysteine + H(+). Specifically methylates the cytosine at position 1407 (m5C1407) of 16S rRNA. This chain is Ribosomal RNA small subunit methyltransferase F, found in Escherichia coli (strain SE11).